Consider the following 182-residue polypeptide: Adenine phosphoribosyltransferase (182 aa).

Belongs to the purine/pyrimidine phosphoribosyltransferase family. In terms of assembly, homodimer.

It is found in the cytoplasm. The enzyme catalyses AMP + diphosphate = 5-phospho-alpha-D-ribose 1-diphosphate + adenine. It functions in the pathway purine metabolism; AMP biosynthesis via salvage pathway; AMP from adenine: step 1/1. Its function is as follows. Catalyzes a salvage reaction resulting in the formation of AMP, that is energically less costly than de novo synthesis. The protein is Adenine phosphoribosyltransferase of Stutzerimonas stutzeri (Pseudomonas stutzeri).